Reading from the N-terminus, the 52-residue chain is MDKVQYLTRSAIRRASTIEMPQQARQNLQNLFINFCLILICLLLICIIVMLL.

Met-1 carries the post-translational modification N-acetylmethionine. The Cytoplasmic portion of the chain corresponds to 1–31; that stretch reads MDKVQYLTRSAIRRASTIEMPQQARQNLQNL. Residue Ser-16 is modified to Phosphoserine; by PKA and DMPK. Thr-17 bears the Phosphothreonine; by CaMK2 mark. A helical membrane pass occupies residues 32–52; it reads FINFCLILICLLLICIIVMLL. Cys-36 is lipidated: S-palmitoyl cysteine.

It belongs to the phospholamban family. In terms of assembly, homopentamer. Can also form heterooligomers with other sarcoplasmic/endoplasmic reticulum calcium ATPase (SERCA) regulators ARLN, ERLN, SLN and STRIT1/DWORF. Monomer. Interacts with HAX1. Interacts as a monomer with ATP2A2; the interaction decreases ATP2A2 Ca(2+) affinity. Interacts with VMP1; VMP1 competes with PLN and SLN to prevent them from forming an inhibitory complex with ATP2A2. Interacts with S100A1 in a Ca(2+)-dependent manner. Post-translationally, phosphorylation by DMPK may stimulate sarcoplasmic reticulum calcium uptake in cardiomyocytes. Phosphorylation by PKA abolishes the inhibition of ATP2A2-mediated calcium uptake. Phosphorylated at Thr-17 by CaMK2, and in response to beta-adrenergic stimulation. In terms of processing, palmitoylated by ZDHHC16, promoting formation of the homopentamer. In elongated spermatids, proteolytically cleaved by SPPL2C which modulates intracellular Ca(2+) homeostasis. In terms of tissue distribution, heart.

It is found in the endoplasmic reticulum membrane. It localises to the sarcoplasmic reticulum membrane. Its subcellular location is the mitochondrion membrane. The protein localises to the membrane. Reversibly inhibits the activity of ATP2A2/SERCA2 in cardiac sarcoplasmic reticulum by decreasing the apparent affinity of the ATPase for Ca(2+). Binds preferentially to the ATP-bound E1 conformational form of ATP2A2 which predominates at low Ca(2+) concentrations during the diastolic phase of the cardiac cycle. Inhibits ATP2A2 Ca(2+) affinity by disrupting its allosteric activation by ATP. Modulates the contractility of the heart muscle in response to physiological stimuli via its effects on ATP2A2. Modulates calcium re-uptake during muscle relaxation and plays an important role in calcium homeostasis in the heart muscle. The degree of ATP2A2 inhibition depends on the oligomeric state of PLN. ATP2A2 inhibition is alleviated by PLN phosphorylation. Also inhibits the activity of ATP2A3/SERCA3. Controls intracellular Ca(2+) levels in elongated spermatids and may play a role in germ cell differentiation. In the thalamic reticular nucleus of the brain, plays a role in the regulation of sleep patterns and executive functioning. This is Phospholamban from Canis lupus familiaris (Dog).